The sequence spans 419 residues: MNLLEHMGKAAKQASWQLAMLSTAKKNQALAVIANLLESESQTILQANERDMAAARESGMSEALLDRLLLTPARLAAIANDVRQVCRLNDPVGRVIDGSLLDSGLKLERRRVPLGVIGVIYEARPNVTIDVASLCLKTGNAVILRGGKETHYTNQATVNVIQRALEQCGLPAAAVQAIESPDRQLVNELLRLDRYVDMLIPRGGASLHKLCREQSTIPVITGGIGVCHTFVDENADFEKALLVIENAKIQRPSACNSLETLLVHQAVAKTFLPLLSARMHAFGVTLHASPLAMPYLADGKAKVVAVEAADYDDEWLSLDLNVDIVTDIDAAIDHIREHGTSHSDAILTRSLSHAEYFVRAVDSSAVYVNASTRFTDGGQFGLGAEVAVSTQKLHARGPMGLDALTTYKWIGYGDDLVRS.

This sequence belongs to the gamma-glutamyl phosphate reductase family.

The protein resides in the cytoplasm. It catalyses the reaction L-glutamate 5-semialdehyde + phosphate + NADP(+) = L-glutamyl 5-phosphate + NADPH + H(+). It functions in the pathway amino-acid biosynthesis; L-proline biosynthesis; L-glutamate 5-semialdehyde from L-glutamate: step 2/2. Catalyzes the NADPH-dependent reduction of L-glutamate 5-phosphate into L-glutamate 5-semialdehyde and phosphate. The product spontaneously undergoes cyclization to form 1-pyrroline-5-carboxylate. The sequence is that of Gamma-glutamyl phosphate reductase from Yersinia pestis.